The primary structure comprises 341 residues: HTH-type transcriptional repressor PurR (341 aa).

In terms of domain architecture, HTH lacI-type spans 2 to 56 (ATIKDVAKHAGVSTTTVSHVINKTRFVAEDTKAAVWAAIKALNYSPSAVARSLKV). A DNA-binding region (H-T-H motif) is located at residues 4 to 23 (IKDVAKHAGVSTTTVSHVIN). The DNA-binding element occupies 48–56 (SAVARSLKV). Positions 73, 190, 192, 221, and 275 each coordinate hypoxanthine.

As to quaternary structure, homodimer.

It functions in the pathway purine metabolism; purine nucleotide biosynthesis [regulation]. In terms of biological role, is the main repressor of the genes involved in the de novo synthesis of purine nucleotides, regulating purB, purC, purEK, purF, purHD, purL, purMN and guaBA expression. PurR is allosterically activated to bind its cognate DNA by binding the purine corepressors, hypoxanthine or guanine, thereby effecting transcription repression. This is HTH-type transcriptional repressor PurR from Photorhabdus laumondii subsp. laumondii (strain DSM 15139 / CIP 105565 / TT01) (Photorhabdus luminescens subsp. laumondii).